A 425-amino-acid chain; its full sequence is Dihydroorotase (425 aa).

Residues histidine 61 and histidine 63 each coordinate Zn(2+). Substrate contacts are provided by residues 63-65 (HLR) and asparagine 95. The Zn(2+) site is built by aspartate 153, histidine 180, and histidine 233. Asparagine 279 contacts substrate. Aspartate 306 provides a ligand contact to Zn(2+). Aspartate 306 is an active-site residue. Histidine 310 contributes to the substrate binding site.

Belongs to the metallo-dependent hydrolases superfamily. DHOase family. Class I DHOase subfamily. Zn(2+) serves as cofactor.

The catalysed reaction is (S)-dihydroorotate + H2O = N-carbamoyl-L-aspartate + H(+). Its pathway is pyrimidine metabolism; UMP biosynthesis via de novo pathway; (S)-dihydroorotate from bicarbonate: step 3/3. Its function is as follows. Catalyzes the reversible cyclization of carbamoyl aspartate to dihydroorotate. The polypeptide is Dihydroorotase (Geobacter sp. (strain M21)).